A 297-amino-acid polypeptide reads, in one-letter code: Nucleotide-binding protein BTH_I0482 (297 aa).

Residue 8–15 (GISGSGKS) participates in ATP binding. 57–60 (DARS) serves as a coordination point for GTP.

It belongs to the RapZ-like family.

Functionally, displays ATPase and GTPase activities. In Burkholderia thailandensis (strain ATCC 700388 / DSM 13276 / CCUG 48851 / CIP 106301 / E264), this protein is Nucleotide-binding protein BTH_I0482.